The chain runs to 182 residues: ADP-ribosylation factor-like protein 3 (182 aa).

Residue glycine 2 is the site of N-myristoyl glycine attachment. Residue serine 5 is modified to Phosphoserine. Residues 24-31, threonine 48, 67-71, glycine 70, 126-129, and 159-161 each bind GTP; these read GLDNAGKT, DIGGQ, NKQD, and SAL. Threonine 31 and threonine 48 together coordinate Mg(2+).

This sequence belongs to the small GTPase superfamily. Arf family. Found in a complex with ARL3, RP2 and UNC119 (or UNC119B); RP2 induces hydrolysis of GTP ARL3 in the complex, leading to the release of UNC119 (or UNC119B). Interacts with RP2; interaction is direct and stimulated with the activated GTP-bound form of ARL3. Interacts with SYS1. Interacts with ARL2BP; the GTP-bound form interacts with ARL2BP. Microtubule-associated protein. Does not interact with TBCC. Interacts with RP2. Interacts with PDE6D; the interaction occurs specifically with the GTP-bound form of ARL3. Interacts with GGA1; the interaction recruits PKD1:PKD2 complex to trans-Golgi network and is required for ciliary targeting of PKD1:PKD2 complex. Interacts with DNAAF9.

Its subcellular location is the golgi apparatus membrane. The protein localises to the cytoplasm. The protein resides in the cytoskeleton. It is found in the spindle. It localises to the nucleus. Its subcellular location is the microtubule organizing center. The protein localises to the centrosome. The protein resides in the cell projection. It is found in the cilium. Small GTP-binding protein which cycles between an inactive GDP-bound and an active GTP-bound form, and the rate of cycling is regulated by guanine nucleotide exchange factors (GEF) and GTPase-activating proteins (GAP). Required for normal cytokinesis and cilia signaling. Requires assistance from GTPase-activating proteins (GAPs) like RP2 and PDE6D, in order to cycle between inactive GDP-bound and active GTP-bound forms. Required for targeting proteins to the cilium, including myristoylated NPHP3 and prenylated INPP5E. Targets NPHP3 to the ciliary membrane by releasing myristoylated NPHP3 from UNC119B cargo adapter into the cilium. Required for PKD1:PKD2 complex targeting from the trans-Golgi network to the cilium. The chain is ADP-ribosylation factor-like protein 3 (ARL3) from Bos taurus (Bovine).